The primary structure comprises 130 residues: Large ribosomal subunit protein bL12 (130 aa).

It belongs to the bacterial ribosomal protein bL12 family. As to quaternary structure, homodimer. Part of the ribosomal stalk of the 50S ribosomal subunit. Forms a multimeric L10(L12)X complex, where L10 forms an elongated spine to which 2 to 4 L12 dimers bind in a sequential fashion. Binds GTP-bound translation factors.

Forms part of the ribosomal stalk which helps the ribosome interact with GTP-bound translation factors. Is thus essential for accurate translation. The protein is Large ribosomal subunit protein bL12 of Herpetosiphon aurantiacus (strain ATCC 23779 / DSM 785 / 114-95).